The following is an 892-amino-acid chain: Alanine--tRNA ligase (892 aa).

Residues H594, H598, C702, and H706 each contribute to the Zn(2+) site.

Belongs to the class-II aminoacyl-tRNA synthetase family. It depends on Zn(2+) as a cofactor.

It localises to the cytoplasm. It catalyses the reaction tRNA(Ala) + L-alanine + ATP = L-alanyl-tRNA(Ala) + AMP + diphosphate. Functionally, catalyzes the attachment of alanine to tRNA(Ala) in a two-step reaction: alanine is first activated by ATP to form Ala-AMP and then transferred to the acceptor end of tRNA(Ala). Also edits incorrectly charged Ser-tRNA(Ala) and Gly-tRNA(Ala) via its editing domain. The chain is Alanine--tRNA ligase from Pyrobaculum arsenaticum (strain DSM 13514 / JCM 11321 / PZ6).